The following is a 127-amino-acid chain: Major sperm protein 152 (127 aa).

T2 is subject to N-acetylthreonine. Positions 9–126 constitute an MSP domain; the sequence is DIQTQPGTKI…RRKNLPIEYN (118 aa).

In terms of tissue distribution, sperm.

Its subcellular location is the cell projection. It localises to the pseudopodium. It is found in the cytoplasm. The protein localises to the cytoskeleton. Functionally, central component in molecular interactions underlying sperm crawling. Forms an extensive filament system that extends from sperm villipoda, along the leading edge of the pseudopod. The sequence is that of Major sperm protein 152 (msp-152) from Caenorhabditis elegans.